Here is a 342-residue protein sequence, read N- to C-terminus: Dihydroorotate dehydrogenase (quinone) (342 aa).

FMN-binding positions include 60 to 64 and T84; that span reads AGFDK. K64 lines the substrate pocket. 109 to 113 contributes to the substrate binding site; the sequence is NRMGF. FMN-binding residues include N137 and N170. A substrate-binding site is contributed by N170. Residue S173 is the Nucleophile of the active site. N175 is a binding site for substrate. The FMN site is built by K215 and T243. 244–245 serves as a coordination point for substrate; that stretch reads NT. Residues G266, G295, and 316-317 each bind FMN; that span reads YT.

Belongs to the dihydroorotate dehydrogenase family. Type 2 subfamily. As to quaternary structure, monomer. The cofactor is FMN.

The protein resides in the cell membrane. It catalyses the reaction (S)-dihydroorotate + a quinone = orotate + a quinol. It participates in pyrimidine metabolism; UMP biosynthesis via de novo pathway; orotate from (S)-dihydroorotate (quinone route): step 1/1. Catalyzes the conversion of dihydroorotate to orotate with quinone as electron acceptor. The polypeptide is Dihydroorotate dehydrogenase (quinone) (Halorhodospira halophila (strain DSM 244 / SL1) (Ectothiorhodospira halophila (strain DSM 244 / SL1))).